Reading from the N-terminus, the 386-residue chain is Ovalbumin (386 aa).

Position 2 is an N-acetylglycine (glycine 2). A signal peptide (not cleaved) is located at residues 22 to 48 (HHANENIFYCPIAIMSALAMVYLGAKD). A Phosphoserine modification is found at serine 69. Cysteine 74 and cysteine 121 are oxidised to a cystine. Glutamate 192 contacts Ca(2+). A glycan (N-linked (GlcNAc...) asparagine) is linked at asparagine 293. A Phosphoserine modification is found at serine 345.

It belongs to the serpin family. Ov-serpin subfamily. In terms of assembly, homodimer. In terms of processing, undergoes proteolytic cleavage first at the canonical P1-P1' site, and then at the P8-P7 site by subtilisin. As to expression, major protein of egg white. Expressed in the magnum of the oviduct (at protein level).

It is found in the secreted. Functionally, non-inhibitory serpin. Storage protein of egg white. The chain is Ovalbumin (SERPINB14) from Gallus gallus (Chicken).